The sequence spans 443 residues: Thymidine phosphorylase (443 aa).

This sequence belongs to the thymidine/pyrimidine-nucleoside phosphorylase family. As to quaternary structure, homodimer.

It carries out the reaction thymidine + phosphate = 2-deoxy-alpha-D-ribose 1-phosphate + thymine. It participates in pyrimidine metabolism; dTMP biosynthesis via salvage pathway; dTMP from thymine: step 1/2. In terms of biological role, the enzymes which catalyze the reversible phosphorolysis of pyrimidine nucleosides are involved in the degradation of these compounds and in their utilization as carbon and energy sources, or in the rescue of pyrimidine bases for nucleotide synthesis. This Shewanella putrefaciens (strain CN-32 / ATCC BAA-453) protein is Thymidine phosphorylase.